Here is an 87-residue protein sequence, read N- to C-terminus: Large ribosomal subunit protein bL27 (87 aa).

Positions 1–24 (MAHKKGTGSTRNGRDSRSQRLGVK) are disordered.

The protein belongs to the bacterial ribosomal protein bL27 family.

The polypeptide is Large ribosomal subunit protein bL27 (Crocosphaera subtropica (strain ATCC 51142 / BH68) (Cyanothece sp. (strain ATCC 51142))).